The sequence spans 135 residues: uncharacterized protein (135 aa).

4 helical membrane-spanning segments follow: residues 4 to 24, 26 to 46, 68 to 88, and 93 to 113; these read IIIC…WIFG, WDMP…TGVI, LILV…NGAW, and LIAY…CAAL.

The protein belongs to the bacteriophage holin family. Cp-1 holin subfamily.

The protein localises to the cell membrane. This is an uncharacterized protein from Clostridium perfringens (strain 13 / Type A).